Consider the following 124-residue polypeptide: Small ribosomal subunit protein uS11 (124 aa).

The protein belongs to the universal ribosomal protein uS11 family. Part of the 30S ribosomal subunit. Interacts with proteins S7 and S18. Binds to IF-3.

Its function is as follows. Located on the platform of the 30S subunit, it bridges several disparate RNA helices of the 16S rRNA. Forms part of the Shine-Dalgarno cleft in the 70S ribosome. This Sulfurovum sp. (strain NBC37-1) protein is Small ribosomal subunit protein uS11.